We begin with the raw amino-acid sequence, 192 residues long: uncharacterized protein (192 aa).

Residues 29-160 enclose the Nudix hydrolase domain; sequence HRQAAVLIPI…PLDIYRRGDS (132 aa). The Nudix box signature appears at 67–89; it reads GAVDDTDTSVIAAALREAEEEVA. Residues glutamate 83 and glutamate 87 each contribute to the Mg(2+) site.

This sequence belongs to the Nudix hydrolase family. PCD1 subfamily. Mn(2+) serves as cofactor. Mg(2+) is required as a cofactor.

Probably mediates the hydrolysis of some nucleoside diphosphate derivatives. This is an uncharacterized protein from Escherichia coli O7:K1 (strain IAI39 / ExPEC).